Reading from the N-terminus, the 498-residue chain is ATP synthase subunit beta, chloroplastic (498 aa).

172 to 179 contacts ATP; the sequence is GGAGVGKT.

Belongs to the ATPase alpha/beta chains family. As to quaternary structure, F-type ATPases have 2 components, CF(1) - the catalytic core - and CF(0) - the membrane proton channel. CF(1) has five subunits: alpha(3), beta(3), gamma(1), delta(1), epsilon(1). CF(0) has four main subunits: a(1), b(1), b'(1) and c(9-12).

It is found in the plastid. The protein resides in the chloroplast thylakoid membrane. The enzyme catalyses ATP + H2O + 4 H(+)(in) = ADP + phosphate + 5 H(+)(out). Produces ATP from ADP in the presence of a proton gradient across the membrane. The catalytic sites are hosted primarily by the beta subunits. This Pelargonium hortorum (Common geranium) protein is ATP synthase subunit beta, chloroplastic.